A 312-amino-acid chain; its full sequence is Protein phosphatase PTC7 homolog fig (312 aa).

The PPM-type phosphatase domain maps to 42–306 (IQGSSKDQLA…DDITVILASV (265 aa)). Asp83, Gly84, and Asp228 together coordinate Mn(2+).

It belongs to the PP2C family. Requires Mg(2+) as cofactor. Mn(2+) is required as a cofactor.

The enzyme catalyses O-phospho-L-seryl-[protein] + H2O = L-seryl-[protein] + phosphate. It catalyses the reaction O-phospho-L-threonyl-[protein] + H2O = L-threonyl-[protein] + phosphate. The sequence is that of Protein phosphatase PTC7 homolog fig from Drosophila mojavensis (Fruit fly).